We begin with the raw amino-acid sequence, 39 residues long: MTIDRTYPIFTVRWLAVHGLAIPTVSFLGSISAMQFIQR.

A helical membrane pass occupies residues 14–30 (WLAVHGLAIPTVSFLGS). H18 serves as a coordination point for heme.

It belongs to the PsbE/PsbF family. In terms of assembly, heterodimer of an alpha subunit and a beta subunit. PSII is composed of 1 copy each of membrane proteins PsbA, PsbB, PsbC, PsbD, PsbE, PsbF, PsbH, PsbI, PsbJ, PsbK, PsbL, PsbM, PsbT, PsbX, PsbY, PsbZ, Psb30/Ycf12, at least 3 peripheral proteins of the oxygen-evolving complex and a large number of cofactors. It forms dimeric complexes. Heme b is required as a cofactor.

It is found in the plastid. Its subcellular location is the chloroplast thylakoid membrane. Functionally, this b-type cytochrome is tightly associated with the reaction center of photosystem II (PSII). PSII is a light-driven water:plastoquinone oxidoreductase that uses light energy to abstract electrons from H(2)O, generating O(2) and a proton gradient subsequently used for ATP formation. It consists of a core antenna complex that captures photons, and an electron transfer chain that converts photonic excitation into a charge separation. This is Cytochrome b559 subunit beta from Beta vulgaris (Sugar beet).